The chain runs to 306 residues: Porphobilinogen deaminase (306 aa).

The residue at position 239 (C239) is an S-(dipyrrolylmethanemethyl)cysteine.

The protein belongs to the HMBS family. Monomer. Dipyrromethane serves as cofactor.

It carries out the reaction 4 porphobilinogen + H2O = hydroxymethylbilane + 4 NH4(+). Its pathway is porphyrin-containing compound metabolism; protoporphyrin-IX biosynthesis; coproporphyrinogen-III from 5-aminolevulinate: step 2/4. Its function is as follows. Tetrapolymerization of the monopyrrole PBG into the hydroxymethylbilane pre-uroporphyrinogen in several discrete steps. The protein is Porphobilinogen deaminase (hemC) of Helicobacter pylori (strain ATCC 700392 / 26695) (Campylobacter pylori).